The following is a 99-amino-acid chain: Goannatyrotoxin-Vere1 (99 aa).

The N-terminal stretch at 1–28 (MIASMKPWPLVMVAALCILFCLGTLVDA) is a signal peptide. The residue at position 64 (tyrosine 64) is a Tyrosine amide. Residues 68–99 (SSPETLMSELIFGENSNSDHSSRSRFDDSYMW) constitute a propeptide, C-terminal extension.

This sequence belongs to the NPY family. Expressed by the mandibular venom gland.

It is found in the secreted. Its function is as follows. Shows a potent unique triphasic action, rapid biphasic hypertension followed by prolonged hypotension. The sequence is that of Goannatyrotoxin-Vere1 from Varanus eremius (Rusty desert monitor).